A 513-amino-acid chain; its full sequence is Fructose import ATP-binding protein FruK (513 aa).

ABC transporter domains lie at 8-244 and 262-505; these read VVMK…IGKS and PGEK…IANT. Residue 40 to 47 coordinates ATP; it reads GENGAGKS.

This sequence belongs to the ABC transporter superfamily. As to quaternary structure, the complex is composed of an ATP-binding protein (FruK), two transmembrane proteins (FruF and FruG) and a solute-binding protein (FruE).

The protein resides in the cell membrane. The catalysed reaction is D-fructose(out) + ATP + H2O = D-fructose(in) + ADP + phosphate + H(+). In terms of biological role, part of the high-affinity ABC transporter complex FruEKFG involved in fructose uptake. Can also transport ribose and xylose, with lower affinity. Probably responsible for energy coupling to the transport system. The protein is Fructose import ATP-binding protein FruK of Bifidobacterium longum (strain NCC 2705).